The sequence spans 157 residues: GTP-dependent dephospho-CoA kinase (157 aa).

Residues Asp40, Asp59, Lys61, Glu107, and Asp128 each contribute to the GTP site.

The protein belongs to the GTP-dependent DPCK family.

It catalyses the reaction 3'-dephospho-CoA + GTP = GDP + CoA + H(+). The protein operates within cofactor biosynthesis; coenzyme A biosynthesis. Its function is as follows. Catalyzes the GTP-dependent phosphorylation of the 3'-hydroxyl group of dephosphocoenzyme A to form coenzyme A (CoA). In Desulfurococcus amylolyticus (strain DSM 18924 / JCM 16383 / VKM B-2413 / 1221n) (Desulfurococcus kamchatkensis), this protein is GTP-dependent dephospho-CoA kinase.